Reading from the N-terminus, the 219-residue chain is UPF0502 protein HCH_06091 (219 aa).

The protein belongs to the UPF0502 family.

The polypeptide is UPF0502 protein HCH_06091 (Hahella chejuensis (strain KCTC 2396)).